Here is a 409-residue protein sequence, read N- to C-terminus: MKAEILCVGTELLLGDIVNTNAQYISKELANIGIEVYHHSVIGDNENRLLKELERAFNYCDLVITTGGLGPTKDDLTKESVAKFFQEDLVLHEKSLKQIEKRLLCFNKSMTESNKKQAYFPKNCEILENPNGTAPGFIIEKDNKIAIILPGPPYEMQPMFENKVIPYLEKLTNCTIKSKVLRITGIGESDVADLISDILESQTNPTVAPYAKQGETTLRITAKANSEEKALNLIVPIEKEIRQILGDNIYSSGETSLEEVIASILVKRNLTIATAESCTGGLLAGKLINFPGISSVFLEGAITYSNESKINRLNVKKETLEKYTAVSKEVALEMAEGIAKSSGTNIGISTTGVAGPGGGTYDKPIGLVYIGLYINGKTFVKELNYSGNRQFIRNITVTRALDFLRRNLE.

Belongs to the CinA family.

The polypeptide is Putative competence-damage inducible protein (Clostridium botulinum (strain Okra / Type B1)).